Here is a 149-residue protein sequence, read N- to C-terminus: 3-dehydroquinate dehydratase (149 aa).

The active-site Proton acceptor is Y23. The substrate site is built by N74, H80, and D87. H100 (proton donor) is an active-site residue. Residues 101 to 102 (LS) and R111 contribute to the substrate site.

It belongs to the type-II 3-dehydroquinase family. As to quaternary structure, homododecamer.

The enzyme catalyses 3-dehydroquinate = 3-dehydroshikimate + H2O. Its pathway is metabolic intermediate biosynthesis; chorismate biosynthesis; chorismate from D-erythrose 4-phosphate and phosphoenolpyruvate: step 3/7. Its function is as follows. Catalyzes a trans-dehydration via an enolate intermediate. This is 3-dehydroquinate dehydratase from Ruegeria pomeroyi (strain ATCC 700808 / DSM 15171 / DSS-3) (Silicibacter pomeroyi).